We begin with the raw amino-acid sequence, 89 residues long: Small ribosomal subunit protein uS15 (89 aa).

Belongs to the universal ribosomal protein uS15 family. Part of the 30S ribosomal subunit. Forms a bridge to the 50S subunit in the 70S ribosome, contacting the 23S rRNA.

Functionally, one of the primary rRNA binding proteins, it binds directly to 16S rRNA where it helps nucleate assembly of the platform of the 30S subunit by binding and bridging several RNA helices of the 16S rRNA. In terms of biological role, forms an intersubunit bridge (bridge B4) with the 23S rRNA of the 50S subunit in the ribosome. This is Small ribosomal subunit protein uS15 from Latilactobacillus sakei subsp. sakei (strain 23K) (Lactobacillus sakei subsp. sakei).